The sequence spans 472 residues: Aspartyl/glutamyl-tRNA(Asn/Gln) amidotransferase subunit B (472 aa).

This sequence belongs to the GatB/GatE family. GatB subfamily. In terms of assembly, heterotrimer of A, B and C subunits.

The enzyme catalyses L-glutamyl-tRNA(Gln) + L-glutamine + ATP + H2O = L-glutaminyl-tRNA(Gln) + L-glutamate + ADP + phosphate + H(+). It catalyses the reaction L-aspartyl-tRNA(Asn) + L-glutamine + ATP + H2O = L-asparaginyl-tRNA(Asn) + L-glutamate + ADP + phosphate + 2 H(+). Functionally, allows the formation of correctly charged Asn-tRNA(Asn) or Gln-tRNA(Gln) through the transamidation of misacylated Asp-tRNA(Asn) or Glu-tRNA(Gln) in organisms which lack either or both of asparaginyl-tRNA or glutaminyl-tRNA synthetases. The reaction takes place in the presence of glutamine and ATP through an activated phospho-Asp-tRNA(Asn) or phospho-Glu-tRNA(Gln). The polypeptide is Aspartyl/glutamyl-tRNA(Asn/Gln) amidotransferase subunit B (Sulfolobus acidocaldarius (strain ATCC 33909 / DSM 639 / JCM 8929 / NBRC 15157 / NCIMB 11770)).